Reading from the N-terminus, the 127-residue chain is MSANSPPTIKCNVVTHYIEEQSEPNNQRYVFSYTITIRNLGKGSAKLLSRYWLITDANGKRLVIEGEGVVGEQPEIKMNEEYTYTSGTIIETPLGVMQGHYVMGTEDGETFKAEVSPFRLAIPNILH.

The region spanning 3-127 is the ApaG domain; sequence ANSPPTIKCN…FRLAIPNILH (125 aa).

This Photobacterium profundum (strain SS9) protein is Protein ApaG.